The primary structure comprises 76 residues: uncharacterized protein (76 aa).

A disordered region spans residues Met-1–Pro-24. The span at Gly-8–Ser-22 shows a compositional bias: basic and acidic residues.

This is an uncharacterized protein from Dryophytes versicolor (chameleon treefrog).